The primary structure comprises 360 residues: Probable CCR4-associated factor 1 homolog 1 (360 aa).

Residues D37, E39, D155, and D226 each contribute to the a divalent metal cation site.

Belongs to the CAF1 family. Component of the CCR4-NOT complex, at least composed of CRR4 and CAF1 proteins. Requires a divalent metal cation as cofactor.

It is found in the nucleus. The protein localises to the cytoplasm. The catalysed reaction is Exonucleolytic cleavage of poly(A) to 5'-AMP.. In terms of biological role, ubiquitous transcription factor required for a diverse set of processes. It is a component of the CCR4 complex involved in the control of gene expression. This chain is Probable CCR4-associated factor 1 homolog 1 (CAF1-1), found in Arabidopsis thaliana (Mouse-ear cress).